The primary structure comprises 177 residues: Nucleoside triphosphate/diphosphate phosphatase (177 aa).

Residue R24 is the Proton donor of the active site. Mg(2+) is bound by residues N88, D104, D106, D108, D121, and E124.

Belongs to the Ntdp family. Mg(2+) serves as cofactor.

The catalysed reaction is a ribonucleoside 5'-triphosphate + H2O = a ribonucleoside 5'-diphosphate + phosphate + H(+). It carries out the reaction a ribonucleoside 5'-diphosphate + H2O = a ribonucleoside 5'-phosphate + phosphate + H(+). Has nucleoside phosphatase activity towards nucleoside triphosphates and nucleoside diphosphates. The sequence is that of Nucleoside triphosphate/diphosphate phosphatase from Geobacillus sp. (strain WCH70).